The primary structure comprises 452 residues: Phosphoglucosamine mutase (452 aa).

Serine 104 (phosphoserine intermediate) is an active-site residue. Residues serine 104, aspartate 246, aspartate 248, and aspartate 250 each contribute to the Mg(2+) site. Serine 104 carries the post-translational modification Phosphoserine.

This sequence belongs to the phosphohexose mutase family. It depends on Mg(2+) as a cofactor. Post-translationally, activated by phosphorylation.

It carries out the reaction alpha-D-glucosamine 1-phosphate = D-glucosamine 6-phosphate. In terms of biological role, catalyzes the conversion of glucosamine-6-phosphate to glucosamine-1-phosphate. The protein is Phosphoglucosamine mutase of Streptomyces avermitilis (strain ATCC 31267 / DSM 46492 / JCM 5070 / NBRC 14893 / NCIMB 12804 / NRRL 8165 / MA-4680).